The primary structure comprises 768 residues: Translation initiation factor IF-2, chloroplastic (768 aa).

Disordered regions lie at residues 1-20, 54-77, and 155-176; these read MFLN…SNIN, KSES…DKKS, and KKVA…PPES. Residues 54–65 are compositionally biased toward basic and acidic residues; it reads KSESHTGGEQHL. Residues 160–176 show a composition bias toward polar residues; sequence TPSQNSASIQSNSPPES. Residues 261-434 form the tr-type G domain; sequence KRPPIVTVMG…TLLAELEDLK (174 aa). GTP contacts are provided by residues 270 to 277, 320 to 324, and 374 to 377; these read GHVDHGKT, DTPGH, and SKID.

It belongs to the TRAFAC class translation factor GTPase superfamily. Classic translation factor GTPase family. IF-2 subfamily.

It localises to the plastid. Its subcellular location is the chloroplast. In terms of biological role, one of the essential components for the initiation of protein synthesis. Protects formylmethionyl-tRNA from spontaneous hydrolysis and promotes its binding to the 30S ribosomal subunits. Also involved in the hydrolysis of GTP during the formation of the 70S ribosomal complex. This Pyropia yezoensis (Susabi-nori) protein is Translation initiation factor IF-2, chloroplastic (infB).